A 247-amino-acid chain; its full sequence is MPIDRQTLLSIAKSVRSGARSVRAQISPIHPKGYPFVGGFALATIILFWIWSPLGWIGTLLTIWCALFFRNPARVTPIREGLVVAPADGRISMIAPVVPPAELELGELPMVRISIFMSVFNCHVNRSPVAGRIERIVYRPGKFINAELDKASEDNERNALVISTPNNGLVGVIQIAGLIARRIVTFVHDGQTVETGERFGLIRFGSRLDVFLPEGTQVLVSEGQTTIAGETVLADFQQTDGRTFRSS.

The Schiff-base intermediate with substrate; via pyruvic acid role is filled by S206. S206 carries the pyruvic acid (Ser); by autocatalysis modification.

The protein belongs to the phosphatidylserine decarboxylase family. PSD-A subfamily. In terms of assembly, heterodimer of a large membrane-associated beta subunit and a small pyruvoyl-containing alpha subunit. It depends on pyruvate as a cofactor. Post-translationally, is synthesized initially as an inactive proenzyme. Formation of the active enzyme involves a self-maturation process in which the active site pyruvoyl group is generated from an internal serine residue via an autocatalytic post-translational modification. Two non-identical subunits are generated from the proenzyme in this reaction, and the pyruvate is formed at the N-terminus of the alpha chain, which is derived from the carboxyl end of the proenzyme. The post-translation cleavage follows an unusual pathway, termed non-hydrolytic serinolysis, in which the side chain hydroxyl group of the serine supplies its oxygen atom to form the C-terminus of the beta chain, while the remainder of the serine residue undergoes an oxidative deamination to produce ammonia and the pyruvoyl prosthetic group on the alpha chain.

The protein resides in the cell membrane. It carries out the reaction a 1,2-diacyl-sn-glycero-3-phospho-L-serine + H(+) = a 1,2-diacyl-sn-glycero-3-phosphoethanolamine + CO2. It functions in the pathway phospholipid metabolism; phosphatidylethanolamine biosynthesis; phosphatidylethanolamine from CDP-diacylglycerol: step 2/2. Catalyzes the formation of phosphatidylethanolamine (PtdEtn) from phosphatidylserine (PtdSer). This Nitrobacter winogradskyi (strain ATCC 25391 / DSM 10237 / CIP 104748 / NCIMB 11846 / Nb-255) protein is Phosphatidylserine decarboxylase proenzyme.